Here is a 689-residue protein sequence, read N- to C-terminus: Glycine--tRNA ligase beta subunit (689 aa).

It belongs to the class-II aminoacyl-tRNA synthetase family. As to quaternary structure, tetramer of two alpha and two beta subunits.

The protein localises to the cytoplasm. The catalysed reaction is tRNA(Gly) + glycine + ATP = glycyl-tRNA(Gly) + AMP + diphosphate. In Salmonella agona (strain SL483), this protein is Glycine--tRNA ligase beta subunit.